Reading from the N-terminus, the 90-residue chain is Putative Fis-like DNA-binding protein (90 aa).

The H-T-H motif DNA-binding region spans 66 to 85 (QSRAAALLGIHRATLRKKLK).

The protein belongs to the transcriptional regulatory Fis family.

The protein is Putative Fis-like DNA-binding protein of Xylella fastidiosa (strain Temecula1 / ATCC 700964).